The sequence spans 457 residues: Aromatic amino acid transport protein AroP (457 aa).

At methionine 1–isoleucine 20 the chain is on the cytoplasmic side. A helical membrane pass occupies residues glutamine 21–isoleucine 41. Residue glutamine 42 is a topological domain, periplasmic. The helical transmembrane segment at serine 43–methionine 63 threads the bilayer. Over arginine 64–tyrosine 86 the chain is Cytoplasmic. The helical transmembrane segment at tryptophan 87–alanine 107 threads the bilayer. The Periplasmic segment spans residues methionine 108–tyrosine 117. A helical membrane pass occupies residues isoleucine 118 to isoleucine 138. The Cytoplasmic segment spans residues asparagine 139 to tryptophan 155. A helical transmembrane segment spans residues phenylalanine 156–phenylalanine 176. Over serine 177–threonine 201 the chain is Periplasmic. A helical membrane pass occupies residues glycine 202–isoleucine 222. At threonine 223–glutamine 240 the chain is on the cytoplasmic side. The helical transmembrane segment at valine 241–proline 261 threads the bilayer. The Periplasmic portion of the chain corresponds to tryptophan 262 to proline 271. The chain crosses the membrane as a helical span at residues phenylalanine 272–valine 292. Residues leucine 293–proline 333 lie on the Cytoplasmic side of the membrane. A helical transmembrane segment spans residues valine 334–alanine 354. Over proline 355–alanine 358 the chain is Periplasmic. The chain crosses the membrane as a helical span at residues phenylalanine 359 to leucine 379. Residues alanine 380–leucine 400 lie on the Cytoplasmic side of the membrane. A helical transmembrane segment spans residues phenylalanine 401 to leucine 421. The Periplasmic segment spans residues methionine 422–glycine 425. A helical membrane pass occupies residues methionine 426–cysteine 446. Topologically, residues lysine 447–histidine 457 are cytoplasmic.

This sequence belongs to the amino acid-polyamine-organocation (APC) superfamily. Amino acid transporter (AAT) (TC 2.A.3.1) family.

It localises to the cell inner membrane. It carries out the reaction L-phenylalanine(in) + H(+)(in) = L-phenylalanine(out) + H(+)(out). It catalyses the reaction L-tryptophan(in) + H(+)(in) = L-tryptophan(out) + H(+)(out). The catalysed reaction is L-tyrosine(in) + H(+)(in) = L-tyrosine(out) + H(+)(out). In terms of biological role, permease that is involved in the active transport across the cytoplasmic membrane of all three aromatic amino acids, phenylalanine, tyrosine and tryptophan. The polypeptide is Aromatic amino acid transport protein AroP (aroP) (Salmonella typhi).